The sequence spans 292 residues: 4-hydroxy-tetrahydrodipicolinate synthase (292 aa).

Position 45 (threonine 45) interacts with pyruvate. Catalysis depends on tyrosine 133, which acts as the Proton donor/acceptor. Catalysis depends on lysine 161, which acts as the Schiff-base intermediate with substrate. Pyruvate is bound at residue isoleucine 203.

This sequence belongs to the DapA family. In terms of assembly, homotetramer; dimer of dimers.

Its subcellular location is the cytoplasm. It catalyses the reaction L-aspartate 4-semialdehyde + pyruvate = (2S,4S)-4-hydroxy-2,3,4,5-tetrahydrodipicolinate + H2O + H(+). It participates in amino-acid biosynthesis; L-lysine biosynthesis via DAP pathway; (S)-tetrahydrodipicolinate from L-aspartate: step 3/4. Its function is as follows. Catalyzes the condensation of (S)-aspartate-beta-semialdehyde [(S)-ASA] and pyruvate to 4-hydroxy-tetrahydrodipicolinate (HTPA). In Salmonella typhi, this protein is 4-hydroxy-tetrahydrodipicolinate synthase.